Consider the following 60-residue polypeptide: Potassium channel toxin alpha-KTx 29.1 (60 aa).

An N-terminal signal peptide occupies residues 1 to 28 (MKSVCGVLIILVVLTTMLSISTFSTVGA). 3 disulfides stabilise this stretch: Cys32-Cys51, Cys40-Cys56, and Cys44-Cys58.

Belongs to the short scorpion toxin superfamily. Potassium channel inhibitor family. Alpha-KTx 29 subfamily. As to expression, expressed by the venom gland.

The protein localises to the secreted. Its function is as follows. Weakly inhibits the Kv1.3/KCNA3 channel (1 uM of the toxin inhibits currents by 13.2%) and Kv7.1/KCNQ1 channel (10 uM of the toxin inhibits currents by 27.7%). The polypeptide is Potassium channel toxin alpha-KTx 29.1 (Lychas mucronatus (Chinese swimming scorpion)).